The sequence spans 96 residues: Redox-responsive transcriptional regulator WhiB3 (96 aa).

Residues 22–86 form the 4Fe-4S Wbl-type domain; sequence LCRGVDSSMF…GGLSESEREL (65 aa). Positions 23, 53, 56, and 62 each coordinate [4Fe-4S] cluster.

This sequence belongs to the WhiB family. It depends on [4Fe-4S] cluster as a cofactor. The Fe-S cluster can be nitrosylated by nitric oxide (NO). Post-translationally, upon Fe-S cluster removal intramolecular disulfide bonds are formed.

The protein localises to the cytoplasm. A redox-sensitive transcriptional regulator. Maintains intracellular redox homeostasis by regulating catabolic metabolism and polyketide biosynthesis. Regulates expression of the redox buffer ergothioneine (ERG). In concert with myothiol (MSH), another redox buffer, responds to low pH leading to acid resistance. The apo- but not holo-form probably binds DNA. The protein is Redox-responsive transcriptional regulator WhiB3 (whiB3) of Mycolicibacterium smegmatis (strain ATCC 700084 / mc(2)155) (Mycobacterium smegmatis).